We begin with the raw amino-acid sequence, 597 residues long: Elongation factor 4 (597 aa).

Residues 2-184 (DHIRNFSIIA…ALIAKVPPPK (183 aa)) enclose the tr-type G domain. GTP is bound by residues 14-19 (DHGKST) and 131-134 (NKID).

The protein belongs to the TRAFAC class translation factor GTPase superfamily. Classic translation factor GTPase family. LepA subfamily.

The protein resides in the cell inner membrane. It catalyses the reaction GTP + H2O = GDP + phosphate + H(+). Functionally, required for accurate and efficient protein synthesis under certain stress conditions. May act as a fidelity factor of the translation reaction, by catalyzing a one-codon backward translocation of tRNAs on improperly translocated ribosomes. Back-translocation proceeds from a post-translocation (POST) complex to a pre-translocation (PRE) complex, thus giving elongation factor G a second chance to translocate the tRNAs correctly. Binds to ribosomes in a GTP-dependent manner. The protein is Elongation factor 4 of Paraburkholderia phymatum (strain DSM 17167 / CIP 108236 / LMG 21445 / STM815) (Burkholderia phymatum).